The chain runs to 78 residues: Exodeoxyribonuclease 7 small subunit (78 aa).

It belongs to the XseB family. Heterooligomer composed of large and small subunits.

Its subcellular location is the cytoplasm. It catalyses the reaction Exonucleolytic cleavage in either 5'- to 3'- or 3'- to 5'-direction to yield nucleoside 5'-phosphates.. Bidirectionally degrades single-stranded DNA into large acid-insoluble oligonucleotides, which are then degraded further into small acid-soluble oligonucleotides. This is Exodeoxyribonuclease 7 small subunit from Nocardia farcinica (strain IFM 10152).